Here is a 276-residue protein sequence, read N- to C-terminus: Undecaprenyl-diphosphatase (276 aa).

8 helical membrane passes run 6–26, 49–69, 89–109, 117–137, 151–171, 181–201, 224–244, and 256–276; these read IEIL…WLPI, EMFF…MFWN, FSLW…GILF, LHTP…FIVI, LADI…LSLI, IIGA…TFFL, AELL…VFVI, and FKVF…ITAI.

This sequence belongs to the UppP family.

The protein resides in the cell membrane. It catalyses the reaction di-trans,octa-cis-undecaprenyl diphosphate + H2O = di-trans,octa-cis-undecaprenyl phosphate + phosphate + H(+). Functionally, catalyzes the dephosphorylation of undecaprenyl diphosphate (UPP). Confers resistance to bacitracin. In Enterococcus faecalis (Streptococcus faecalis), this protein is Undecaprenyl-diphosphatase.